The sequence spans 301 residues: MAACVDKWPAAYPCRLPDKFYCALPDCTTTDRPVAPAPAASGSSGDYVWDALRAEAQDDADDEPLLRKFYHDLVLSRPSLESALASLLAAKLCIPGALPQDQLRDLLAGALAAHPEAGRAARADLAAARDRDPACAKMVHCFLYYRGFLALQAHRAAHALWSDNRRAPALLLQSRASEVFGVDIHPGARIGGGILLDHATGVVIGETAVVGYGVSILHAVTLGGTGKESGDRHPKVGDGVLIGAGASVLGNVHIGDGAEIGAGAIVLRDVADGTTAKPIIGKKAEPQRELPGVTMEQRWSD.

Residues isoleucine 280–aspartate 301 form a disordered region.

This sequence belongs to the transferase hexapeptide repeat family. Homomultimer.

The catalysed reaction is L-serine + acetyl-CoA = O-acetyl-L-serine + CoA. It participates in amino-acid biosynthesis; L-cysteine biosynthesis; L-cysteine from L-serine: step 1/2. The polypeptide is Probable serine acetyltransferase 3 (SAT3) (Oryza sativa subsp. japonica (Rice)).